A 409-amino-acid polypeptide reads, in one-letter code: Histidine--tRNA ligase (409 aa).

This sequence belongs to the class-II aminoacyl-tRNA synthetase family.

It is found in the cytoplasm. The enzyme catalyses tRNA(His) + L-histidine + ATP = L-histidyl-tRNA(His) + AMP + diphosphate + H(+). The polypeptide is Histidine--tRNA ligase (hisS) (Archaeoglobus fulgidus (strain ATCC 49558 / DSM 4304 / JCM 9628 / NBRC 100126 / VC-16)).